The primary structure comprises 561 residues: Putative transport protein DNO_0009 (561 aa).

5 helical membrane passes run 4 to 24 (VAIT…LGNI), 29 to 49 (VGLS…IMNL), 74 to 94 (FGLI…FFAS), 104 to 124 (AFAA…YYLF), and 166 to 186 (MGYA…MWLI). RCK C-terminal domains lie at 198 to 283 (LQFF…ILGE) and 285 to 369 (AGHE…LIGN). 6 consecutive transmembrane segments (helical) span residues 379 to 399 (MLPV…PIYL), 411 to 433 (AGGP…LYWF), 447 to 467 (IVLF…STLL), 472 to 492 (FSWI…AGII), 501 to 521 (YLTI…LAFA), and 538 to 558 (VYPL…VLLW).

The protein belongs to the AAE transporter (TC 2.A.81) family. YidE subfamily.

It localises to the cell membrane. This is Putative transport protein DNO_0009 from Dichelobacter nodosus (strain VCS1703A).